The following is a 706-amino-acid chain: Choline transporter-like protein 2 (706 aa).

The Cytoplasmic segment spans residues 1–33 (MGGERQHYYGKHGTPQKYDPTFKGPIYHRGCTD). Position 14 is a phosphothreonine (threonine 14). The chain crosses the membrane as a helical span at residues 34 to 54 (VICCVFLLLAIVGYVAVGIIA). Residues 55–232 (WTHGDPRKVI…RIFEDYTVSW (178 aa)) are Extracellular-facing. 2 N-linked (GlcNAc...) asparagine glycosylation sites follow: asparagine 187 and asparagine 200. A helical transmembrane segment spans residues 233-253 (YWIIIGLVIAMVLSLLFIILL). Topologically, residues 254-256 (RFL) are cytoplasmic. The helical transmembrane segment at 257–277 (AGIMVWVMIVMVILVLGYGIF) threads the bilayer. Residues 278 to 315 (HCYMEYSRLRGEAGSDISLVDLGFQTDLRVYLHLRQTW) lie on the Extracellular side of the membrane. A helical membrane pass occupies residues 316–336 (MAFMIILSILEVIIILLLIFL). Over 337 to 364 (RKRILIAIALIKEASRAVGYVMCSMLYP) the chain is Cytoplasmic. A helical transmembrane segment spans residues 365–385 (LVTFLLLCLCIAYWASTAIFL). The Extracellular portion of the chain corresponds to 386–440 (STSNEAVYKIFSDTDCQAVGKTCNPENFSSSSEFHLCPGAHCQFAFYGGESTYHR). A helical transmembrane segment spans residues 441–461 (ALLGLQIFNAFMFFWLANFVL). Topologically, residues 462–504 (ALGQVTLAGAFASYYWALKKPDDLPAFPLFSAFGRALRYHTGS) are cytoplasmic. Residues 505-525 (LAFGSLLLAIVQIIRVMLEYL) form a helical membrane-spanning segment. At 526-563 (DQRLKAAENKFAKFLMTCLKCCFWCLEKFIKFLNRNAY) the chain is on the extracellular side. A helical membrane pass occupies residues 564 to 584 (IMIAIYGTNFCTSARNAFFLL). The Cytoplasmic portion of the chain corresponds to 585–599 (MRNIIRVAVLDKVTD). A helical membrane pass occupies residues 600 to 620 (FLFLLGKLLIVGSVGILAFFF). The Extracellular portion of the chain corresponds to 621-638 (FTHRIRIVQDTAPPLNYY). The chain crosses the membrane as a helical span at residues 639–659 (WVPILTVIVGSYLIAHGFFSV). At 660–706 (YGMCVDTLFLCFLEDLERNDGSMERPYFMSPTLKRLLNKTNRKPAES) the chain is on the cytoplasmic side.

This sequence belongs to the CTL (choline transporter-like) family. As to quaternary structure, interacts with COCH. N-glycosylated.

Its subcellular location is the cell membrane. It localises to the mitochondrion outer membrane. The enzyme catalyses choline(out) + n H(+)(in) = choline(in) + n H(+)(out). The catalysed reaction is ethanolamine(out) + n H(+)(in) = ethanolamine(in) + n H(+)(out). In terms of biological role, choline/H+ antiporter, mainly in mitochodria. Also acts as a low-affinity ethanolamine/H+ antiporter, regulating the supply of extracellular ethanolamine (Etn) for the CDP-Etn pathway, redistribute intracellular Etn and balance the CDP-Cho and CDP-Etn arms of the Kennedy pathway. The protein is Choline transporter-like protein 2 (SLC44A2) of Sus scrofa (Pig).